The sequence spans 170 residues: Probable calcium-binding protein CML27 (170 aa).

N-acetylalanine is present on A2. 4 EF-hand domains span residues 19 to 54 (ANPE…MGTS), 55 to 85 (YTET…TLCR), 88 to 123 (SSAA…LGMS), and 136 to 159 (VDAD…SSLL). Ca(2+)-binding residues include D32, N34, D36, K38, E43, D68, D70, D72, Y74, E79, D101, D103, N105, E112, D137, D139, D141, N143, and E148.

Its function is as follows. Potential calcium sensor. This Arabidopsis thaliana (Mouse-ear cress) protein is Probable calcium-binding protein CML27 (CML27).